Here is a 303-residue protein sequence, read N- to C-terminus: MAGLRQIAFYGKGGIGKSTTSQNTLAAMAYYFGKKILIVGCDPKADSTRLILHEKAQSTIMQLAAEVGTVEDLELEDVCKPGAGPFNPEQPSPSGGWIKCAESGGPEPGVGCAGRGVITAINFLEEEGAYSDELDFVSYDVLGDVVCGGFAMPIREGKAQEIYIVMSGEMMAMYAANNISRGILKYASSGGVRLAGLICNARMTDREYDLANALATKLGTQMIHFVPRHNIVQHAELRRMTVVEYAETSTQAEEYKELARKIVHNDLKVIPTPMNMDDLESLLMEFGIAEQFDEENVGKKAEA.

11–18 (GKGGIGKS) contributes to the ATP binding site. C112 lines the [4Fe-4S] cluster pocket. R115 is subject to ADP-ribosylarginine; by dinitrogenase reductase ADP-ribosyltransferase. C147 provides a ligand contact to [4Fe-4S] cluster.

This sequence belongs to the NifH/BchL/ChlL family. In terms of assembly, homodimer. It depends on [4Fe-4S] cluster as a cofactor. Post-translationally, the reversible ADP-ribosylation of Arg-115 inactivates the nitrogenase reductase and regulates nitrogenase activity.

It carries out the reaction N2 + 8 reduced [2Fe-2S]-[ferredoxin] + 16 ATP + 16 H2O = H2 + 8 oxidized [2Fe-2S]-[ferredoxin] + 2 NH4(+) + 16 ADP + 16 phosphate + 6 H(+). Functionally, the key enzymatic reactions in nitrogen fixation are catalyzed by the nitrogenase complex, which has 2 components: the iron protein and the molybdenum-iron protein. The chain is Nitrogenase iron protein from Wolinella succinogenes (strain ATCC 29543 / DSM 1740 / CCUG 13145 / JCM 31913 / LMG 7466 / NCTC 11488 / FDC 602W) (Vibrio succinogenes).